Consider the following 304-residue polypeptide: Undecaprenyl-diphosphatase (304 aa).

8 helical membrane-spanning segments follow: residues 5–25, 47–67, 72–92, 111–131, 137–157, 209–231, 248–268, and 282–302; these read FLFI…EFVP, GFPE…VVVL, ISSS…LKAS, FGIN…LFHD, LFST…LIVI, ISGL…AMVG, TNLI…LVVI, and IFAI…FTKV.

Belongs to the UppP family.

It localises to the cell membrane. It carries out the reaction di-trans,octa-cis-undecaprenyl diphosphate + H2O = di-trans,octa-cis-undecaprenyl phosphate + phosphate + H(+). Its function is as follows. Catalyzes the dephosphorylation of undecaprenyl diphosphate (UPP). Confers resistance to bacitracin. In Clostridium perfringens (strain SM101 / Type A), this protein is Undecaprenyl-diphosphatase.